We begin with the raw amino-acid sequence, 426 residues long: Glutamyl-tRNA(Gln) amidotransferase subunit D (426 aa).

The 332-residue stretch at 82 to 413 (KNISILSTGG…KDAKKLICKN (332 aa)) folds into the Asparaginase/glutaminase domain. Residues T92, T168, D169, and K245 contribute to the active site.

This sequence belongs to the asparaginase 1 family. GatD subfamily. As to quaternary structure, heterodimer of GatD and GatE.

The catalysed reaction is L-glutamyl-tRNA(Gln) + L-glutamine + ATP + H2O = L-glutaminyl-tRNA(Gln) + L-glutamate + ADP + phosphate + H(+). Its function is as follows. Allows the formation of correctly charged Gln-tRNA(Gln) through the transamidation of misacylated Glu-tRNA(Gln) in organisms which lack glutaminyl-tRNA synthetase. The reaction takes place in the presence of glutamine and ATP through an activated gamma-phospho-Glu-tRNA(Gln). The GatDE system is specific for glutamate and does not act on aspartate. In Methanococcus vannielii (strain ATCC 35089 / DSM 1224 / JCM 13029 / OCM 148 / SB), this protein is Glutamyl-tRNA(Gln) amidotransferase subunit D.